The following is a 455-amino-acid chain: UDP-N-acetylmuramoylalanine--D-glutamate ligase (455 aa).

117 to 123 (GSAGKTT) contributes to the ATP binding site.

This sequence belongs to the MurCDEF family.

It localises to the cytoplasm. It catalyses the reaction UDP-N-acetyl-alpha-D-muramoyl-L-alanine + D-glutamate + ATP = UDP-N-acetyl-alpha-D-muramoyl-L-alanyl-D-glutamate + ADP + phosphate + H(+). It participates in cell wall biogenesis; peptidoglycan biosynthesis. Its function is as follows. Cell wall formation. Catalyzes the addition of glutamate to the nucleotide precursor UDP-N-acetylmuramoyl-L-alanine (UMA). The protein is UDP-N-acetylmuramoylalanine--D-glutamate ligase of Symbiobacterium thermophilum (strain DSM 24528 / JCM 14929 / IAM 14863 / T).